The sequence spans 215 residues: Ras-related protein RAB1BV (215 aa).

Residues 22–29 (GDSGVGKS), 70–74 (DTAGQ), and 128–131 (NKAD) contribute to the GTP site. Positions 183–215 (DSDTRQEAQPSITIKPADQSGNQAAAKSACCGS) are disordered. Residues Cys-212 and Cys-213 are each lipidated (S-geranylgeranyl cysteine).

Belongs to the small GTPase superfamily. Rab family.

The protein resides in the cell membrane. The chain is Ras-related protein RAB1BV (RAB1BV) from Beta vulgaris (Sugar beet).